Consider the following 291-residue polypeptide: Probable prolyl 4-hydroxylase 12 (291 aa).

The Cytoplasmic segment spans residues 1–156 (MACLSRIFLI…GEEPSSVLHE (156 aa)). A Fe2OG dioxygenase domain is found at 125-239 (NGGSIKVRSY…LLVATKLIYA (115 aa)). Fe cation-binding residues include K142 and D144. Residues 157–173 (SLLATVVLYLSNTTQGG) traverse the membrane as a helical; Signal-anchor for type II membrane protein segment. Residues 174–291 (ELLFPNSEMK…GTCRKSCNAC (118 aa)) are Lumenal-facing. N-linked (GlcNAc...) asparagine glycosylation occurs at N211. H220 contacts Fe cation. Residues 251–291 (CSDEDENCGRWAKLGECKKNPVYMIGSPDYYGTCRKSCNAC) form the ShKT domain. 3 disulfides stabilise this stretch: C251–C291, C258–C284, and C267–C288.

The protein belongs to the P4HA family. Fe(2+) serves as cofactor. It depends on L-ascorbate as a cofactor.

It is found in the endoplasmic reticulum membrane. The catalysed reaction is L-prolyl-[collagen] + 2-oxoglutarate + O2 = trans-4-hydroxy-L-prolyl-[collagen] + succinate + CO2. In terms of biological role, catalyzes the post-translational formation of 4-hydroxyproline in -Xaa-Pro-Gly- sequences in proline-rich peptide sequences of plant glycoproteins and other proteins. Hydroxyprolines are important constituent of many plant cell wall glycoproteins such as extensins, hydroxyproline-rich glycoproteins, lectins and arabinogalactan proteins. The protein is Probable prolyl 4-hydroxylase 12 of Arabidopsis thaliana (Mouse-ear cress).